The sequence spans 301 residues: Glycine--tRNA ligase alpha subunit (301 aa).

This sequence belongs to the class-II aminoacyl-tRNA synthetase family. As to quaternary structure, tetramer of two alpha and two beta subunits.

It localises to the cytoplasm. It carries out the reaction tRNA(Gly) + glycine + ATP = glycyl-tRNA(Gly) + AMP + diphosphate. The chain is Glycine--tRNA ligase alpha subunit from Alteromonas mediterranea (strain DSM 17117 / CIP 110805 / LMG 28347 / Deep ecotype).